Consider the following 535-residue polypeptide: Arginine-containing cyclodipeptide synthase anoA (535 aa).

A disordered region spans residues 93-114 (LLSPPREPGPIDSETKTREKKS). Positions 105 to 114 (SETKTREKKS) are enriched in basic and acidic residues. The Conserved DDXXE motif motif lies at 424 to 428 (DDIAE).

The protein belongs to the arginine-containing cyclodipeptide synthase family.

The catalysed reaction is L-tryptophyl-tRNA(Trp) + L-arginyl-tRNA(Arg) = cyclo(L-arginyl-L-tryptophyl) + tRNA(Trp) + tRNA(Arg) + H(+). It participates in secondary metabolite biosynthesis. Arginine-containing cyclodipeptide synthase; part of the cluster that mediates the biosynthesis of a highly modified cyclo-arginine-tryptophan dipeptide (cRW). Within the pathway, AnoA acts as the scaffold-generating enzyme and is responsible for formation of the cyclo-Arg-Trp diketopiperazine (cRW) from L-arginyl-tRNA(Arg) + L-tryptophanyl-tRNA(Trp). Additional enzymes from the cluster then further modify the cyclo-Arg-Asp diketopiperazine (cRW) scaffold. This Aspergillus nomiae (Aspergillus nomius) protein is Arginine-containing cyclodipeptide synthase anoA.